An 84-amino-acid polypeptide reads, in one-letter code: Small ribosomal subunit protein uS17 (84 aa).

This sequence belongs to the universal ribosomal protein uS17 family. Part of the 30S ribosomal subunit.

Functionally, one of the primary rRNA binding proteins, it binds specifically to the 5'-end of 16S ribosomal RNA. The polypeptide is Small ribosomal subunit protein uS17 (Caldanaerobacter subterraneus subsp. tengcongensis (strain DSM 15242 / JCM 11007 / NBRC 100824 / MB4) (Thermoanaerobacter tengcongensis)).